Reading from the N-terminus, the 674-residue chain is Carcinine transporter (674 aa).

Over Met1–Leu53 the chain is Cytoplasmic. A helical membrane pass occupies residues Val54 to Phe74. Residues Met75–Pro178 lie on the Extracellular side of the membrane. N-linked (GlcNAc...) asparagine glycosylation is found at Asn122, Asn141, and Asn156. A helical membrane pass occupies residues Thr179–Leu199. At Asn200–Arg206 the chain is on the cytoplasmic side. Residues Leu207 to Lys227 traverse the membrane as a helical segment. Residues Asp228 to Arg236 lie on the Extracellular side of the membrane. The helical transmembrane segment at Val237 to Leu257 threads the bilayer. At Val258 to Ser264 the chain is on the cytoplasmic side. The chain crosses the membrane as a helical span at residues Phe265–Thr285. The Extracellular portion of the chain corresponds to Tyr286–Arg293. Residues Leu294–Glu314 traverse the membrane as a helical segment. Residues Ser315–Thr385 lie on the Cytoplasmic side of the membrane. A helical membrane pass occupies residues Ile386 to Gly406. Over Pro407–Tyr414 the chain is Extracellular. Residues Val415 to Met435 traverse the membrane as a helical segment. The Cytoplasmic portion of the chain corresponds to Asp436–Arg441. A helical transmembrane segment spans residues Trp442–Pro462. At Asp463–Thr469 the chain is on the extracellular side. A helical membrane pass occupies residues Leu470 to Phe490. Residues Ala491 to Arg500 are Cytoplasmic-facing. The chain crosses the membrane as a helical span at residues Gly501–Ile521. Residues Thr522–Asp527 are Extracellular-facing. A helical transmembrane segment spans residues Asn528–Leu548. At Arg549–Ile674 the chain is on the cytoplasmic side. Basic and acidic residues predominate over residues Arg614–Pro631. The disordered stretch occupies residues Arg614 to Ser647.

Belongs to the major facilitator (TC 2.A.1) superfamily. Organic cation transporter (TC 2.A.1.19) family. In terms of tissue distribution, expressed in photoreceptor cells.

It localises to the cell membrane. The protein resides in the cell projection. The protein localises to the axon. Its function is as follows. Carcinine transporter which is required for recycling of the neurotransmitter histamine in photoreceptor neurons of the compound eye. Following histamine release from photoreceptors and its uptake by glia where it is converted to carcinine, required for the uptake of carcinine from glia into photoreceptor cells where it can be hydrolyzed by tan to form histamine and beta-alanine. In Drosophila melanogaster (Fruit fly), this protein is Carcinine transporter.